The sequence spans 229 residues: MGKKYIESSKLIDKNALYTPAEALELAVKTAKAKFDETIELHVRLGVDPRHADQQVRGAVVLPHGTGKDVKVLVFAKGEKAKEAEAAGADFVGADELVQKIQGENWFDYDVVVATPDMMGVVGRLGRVLGPKGLMPNPKSGTVTFDVANAIKEIKAGKVEYRVDKTAIVHCPIGKKSFGTEKLVENFKALMDALVKAKPAAAKGQYLKSVSVSATMGPGAKVNPAKVLD.

Belongs to the universal ribosomal protein uL1 family. In terms of assembly, part of the 50S ribosomal subunit.

In terms of biological role, binds directly to 23S rRNA. The L1 stalk is quite mobile in the ribosome, and is involved in E site tRNA release. Its function is as follows. Protein L1 is also a translational repressor protein, it controls the translation of the L11 operon by binding to its mRNA. The sequence is that of Large ribosomal subunit protein uL1 from Clostridium perfringens (strain ATCC 13124 / DSM 756 / JCM 1290 / NCIMB 6125 / NCTC 8237 / Type A).